Here is a 312-residue protein sequence, read N- to C-terminus: tRNA pseudouridine synthase B (312 aa).

Aspartate 37 serves as the catalytic Nucleophile.

Belongs to the pseudouridine synthase TruB family. Type 1 subfamily.

It catalyses the reaction uridine(55) in tRNA = pseudouridine(55) in tRNA. In terms of biological role, responsible for synthesis of pseudouridine from uracil-55 in the psi GC loop of transfer RNAs. In Thermus thermophilus (strain ATCC BAA-163 / DSM 7039 / HB27), this protein is tRNA pseudouridine synthase B.